A 288-amino-acid chain; its full sequence is Shikimate dehydrogenase (NADP(+)) (288 aa).

Residues 15 to 17 (SKS) and Thr64 contribute to the shikimate site. Lys68 (proton acceptor) is an active-site residue. Glu83 lines the NADP(+) pocket. Residues Asn92 and Asp117 each contribute to the shikimate site. Residues 141–145 (GAGGA), 165–170 (NRTLSK), and Met232 contribute to the NADP(+) site. Residue Tyr234 participates in shikimate binding. Gly254 is an NADP(+) binding site.

It belongs to the shikimate dehydrogenase family. Homodimer.

The catalysed reaction is shikimate + NADP(+) = 3-dehydroshikimate + NADPH + H(+). Its pathway is metabolic intermediate biosynthesis; chorismate biosynthesis; chorismate from D-erythrose 4-phosphate and phosphoenolpyruvate: step 4/7. Its function is as follows. Involved in the biosynthesis of the chorismate, which leads to the biosynthesis of aromatic amino acids. Catalyzes the reversible NADPH linked reduction of 3-dehydroshikimate (DHSA) to yield shikimate (SA). This Psychrobacter arcticus (strain DSM 17307 / VKM B-2377 / 273-4) protein is Shikimate dehydrogenase (NADP(+)).